Here is a 975-residue protein sequence, read N- to C-terminus: MKLEHPDRLMNRTPLSLAALETHDAFAERHIGPDAASQQAMLDTLGFASRAALIDAVIPASIRRAETLPLGPFAQPKSEAEALAALRALADKNQVFRSYIGQGYHDTHTPAVILRNVLENPAWYTAYTPYQPEISQGRLEALLNFQQMVADLTGLAISNASLLDEATAAAEAMTLLQRTGKPASNVFYVADDVLPQTLEVIRTRALPIGIEVKTGPAADAAQANAFGVLLQYPGVNGDVRDYRALTEAIHAAGGHVVVAADLLALTVLTPPGEWGADVAVGNTQRFGVPMGFGGPHAAYLAVRDEFKRQMPGRLVGVTVDAQGKPALRLALQTREQHIRREKATSNVCTAQALLAIMASMYAVYHGPHGLKTIALRVNRIAALFAAGVKQLGFATVNDTFFDTLTIDTGARTAQVHEFAKARRINLRRVSATQVGVSFDETTTRDDLAALLAVFAQAAGGTAPSVDALDAGAAGVAALPAGLERTSAYLTHHVFNRHHSETEMLRYLRSLSDKDLALDRSMIPLGSCTMKLNATSEMLPVTWPEFGRIHPFAPAEQTVGYREMIDQLEQMLVAATGYAAVSLQPNAGSQGEYAGLLIIHAYHASRGEAHRDVCLIPASAHGTNPASAHMAGMKVVVVACDAQGNVDIADLKAKAEQHANDLAAIMITYPSTHGVFEQNVREICEIVHAHGGQVYVDGANMNAMVGLTAPGQFGGDVSHLNLHKTFCIPHGGGGPGVGPVAVGAHLAKFLPNQRSTGYTREEDGIGAVSAAPYGSASILPISWMYIAMMGAKNLTAATETAILNANYIAKRLAPHYPVLYSGPGGLVAHECILDLRPIKETSGISVDDVAKRLMDYGFHAPTMSFPVPGTLMVEPTESESQEELDRFIAAMIAIREEIRAVEEGRADREDNPLRHAPHTAAVVTANEWPHAYSREQAAYPVASLGTNKYWPPVGRADNAYGDRNLFCSCVPMSDYA.

Position 723 is an N6-(pyridoxal phosphate)lysine (K723).

It belongs to the GcvP family. In terms of assembly, the glycine cleavage system is composed of four proteins: P, T, L and H. Requires pyridoxal 5'-phosphate as cofactor.

The enzyme catalyses N(6)-[(R)-lipoyl]-L-lysyl-[glycine-cleavage complex H protein] + glycine + H(+) = N(6)-[(R)-S(8)-aminomethyldihydrolipoyl]-L-lysyl-[glycine-cleavage complex H protein] + CO2. In terms of biological role, the glycine cleavage system catalyzes the degradation of glycine. The P protein binds the alpha-amino group of glycine through its pyridoxal phosphate cofactor; CO(2) is released and the remaining methylamine moiety is then transferred to the lipoamide cofactor of the H protein. The chain is Glycine dehydrogenase (decarboxylating) from Burkholderia ambifaria (strain MC40-6).